Consider the following 133-residue polypeptide: Small ribosomal subunit protein uS9 (133 aa).

Belongs to the universal ribosomal protein uS9 family.

This is Small ribosomal subunit protein uS9 from Ureaplasma parvum serovar 3 (strain ATCC 700970).